The primary structure comprises 396 residues: Cystathionine beta-lyase (396 aa).

Position 211 is an N6-(pyridoxal phosphate)lysine (K211).

This sequence belongs to the trans-sulfuration enzymes family. As to quaternary structure, homotetramer. Pyridoxal 5'-phosphate serves as cofactor.

The protein resides in the cytoplasm. The catalysed reaction is L,L-cystathionine + H2O = L-homocysteine + pyruvate + NH4(+). The enzyme catalyses an S-substituted L-cysteine + H2O = a thiol + pyruvate + NH4(+). It functions in the pathway amino-acid biosynthesis; L-methionine biosynthesis via de novo pathway; L-homocysteine from L-cystathionine: step 1/1. Catalyzes the cleavage of cystathionine to homocysteine, pyruvate and ammonia during methionine biosynthesis. This Haemophilus influenzae (strain ATCC 51907 / DSM 11121 / KW20 / Rd) protein is Cystathionine beta-lyase (metC).